A 511-amino-acid chain; its full sequence is Exodeoxyribonuclease 7 large subunit (511 aa).

This sequence belongs to the XseA family. As to quaternary structure, heterooligomer composed of large and small subunits.

It is found in the cytoplasm. It catalyses the reaction Exonucleolytic cleavage in either 5'- to 3'- or 3'- to 5'-direction to yield nucleoside 5'-phosphates.. Bidirectionally degrades single-stranded DNA into large acid-insoluble oligonucleotides, which are then degraded further into small acid-soluble oligonucleotides. This is Exodeoxyribonuclease 7 large subunit from Brucella melitensis biotype 2 (strain ATCC 23457).